The sequence spans 1885 residues: MKPEIEQELSHTLLTELLAYQFASPVRWIETQDVFLKQHNTERIIEIGPSPTLAGMANRTIKAKYESYDAALSLQRQVLCYSKDAKEIYYKPDPADLAPKETPKQEESTPSAPAAATPTPAAAAAPTPAPAPASAGPVESIPDEPVKANLLIHVLVAQKLKKPLDAVPMTKAIKDLVNGKSTVQNEILGDLGKEFGSTPEKPEDTPLEELAEQFQDSFSGQLGKTSTSLIGRLMSSKMPGGFSITTARKYLESRFGLGAGRQDSVLLMALTNEPANRLGSEADAKTFFDGIAQKYASSAGISLSSGAGSGAGAANSGGAVVDSAALDALTAENKKLAKQQLEVLARYLQSRLKQGSLKSFIKEKEASAVLQKELDLWEAEHGEFYAKGIQPTFSALKSRTYDSYWNWARQDVLSMYFDIIFGKLTSVDRETINQCIQIMNRANPTLIKFMQYHIDHCPEYKGETYKLAKRLGQQLIDNCKQVLTEDPVYKDVSRITGPKTKVSAKGNIEYEETQKDSVRKFEQYVYEMAQGGAMTKVSQPTIQEDLARVYKAISKQASKDSKLELQRVYEDLLKVVESSKEIETEQLTKDILQAATVPTTPTEEVDDPCTPSSDDEIASLPDKTSIIQPVSSTIPSQTIPFLHIQKKTKDGWEYNKKLSSLYLDGLESAAINGLTFKDKYVLVTGAGAGSIGAEILQGLISGGAKVIVTTSRFSKKVTEYYQNMYARYGAAGSTLIVVPFNQGSKQDVDALVQYIYDEPKKGGLGWDLDAIIPFAAIPENGNGLDNIDSKSEFAHRIMLTNLLRLLGAVKSKKPTDTRPAQCILPLSPNHGTFGFDGLYSESKISLETLFNRWYSEDWGSKLTVCGAVIGWTRGTGLMSANNIIAEGIEKLGVRTFSQKEMAFNILGLLTPEIVQLCQEEPVMADLNGGLQFIDNLKDFTSKLRTDLLETADIRRAVSIESAIEQKVVNGDNVDANYSKVMVEPRANMKFDFPTLKSYDEIKQIAPELEGMLDLENVVVVTGFAEVGPWGNSRTRWEMEAYGEFSLEGAIEMAWIMGFIKYHNGNLQGKPYSGWVDAKTQTPIDEKDIKSKYEEEILEHSGIRLIEPELFNGYDPKKKQMIQEIVVQHDLEPFECSKETAEQYKHEHGEKCEIFEIEESGEYTVRILKGATLYVPKALRFDRLVAGQIPTGWDARTYGIPEDTISQVDPITLYVLVATVEALLSAGITDPYEFYKYVHVSEVGNCSGSGMGGVSALRGMFKDRYADKPVQNDILQESFINTMSAWVNMLLLSSSGPIKTPVGACATAVESVDIGIETILSGKAKVVLVGGYDDFQEEGSYEFANMNATSNSIEEFKHGRTPKEMSRPTTTTRNGFMEAQGSGIQVIMTADLALKMGVPIHAVLAMTATATDKIGRSVPAPGKGILTTAREHHGNLKYPSPLLNIKYRKRQLNKRLEQIKSWEETELSYLQEEAELAKEEFGDEFSMHEFLKERTEEVYRESKRQVSDAKKQWGNSFYKSDPRIAPLRGALAAFNLTIDDIGVASFHGTSTVANDKNESATINNMMKHLGRSEGNPVFGVFQKYLTGHPKGAAGAWMLNGAIQILESGLVPGNRNADNVDKLLEQYEYVLYPSRSIQTDGIKAVSVTSFGFGQKGAQAVVVHPDYLFAVLDRSTYEEYATKVSARNKKTYRYMHNAITRNTMFVAKDKAPYSDELEQPVYLDPLARVEENKKKLVFSDKTIQSNQSYVGEVAQKTAKALSTLNKSSKGVGVDVELLSAINIDNETFIERNFTGNEVEYCLNTAHPQASFTGTWSAKEAVFKALGVESKGAGASLIDIEITRDVNGAPKVILHGEAKKAAAKAGVKNVNISISHDDFQATAVALSEF.

A compositionally biased stretch (basic and acidic residues) spans 92 to 107 (PDPADLAPKETPKQEE). The tract at residues 92 to 140 (PDPADLAPKETPKQEESTPSAPAAATPTPAAAAAPTPAPAPASAGPVES) is disordered. The span at 108–126 (STPSAPAAATPTPAAAAAP) shows a compositional bias: low complexity. The Carrier domain occupies 146–221 (VKANLLIHVL…EQFQDSFSGQ (76 aa)). Residue Ser181 is modified to O-(pantetheine 4'-phosphoryl)serine. The Ketosynthase family 3 (KS3) domain occupies 1121-1661 (IQEIVVQHDL…QKGAQAVVVH (541 aa)). Active-site for beta-ketoacyl synthase activity residues include Cys1304, His1546, and His1587. Positions 1771, 1772, and 1773 each coordinate Mg(2+). Residues 1771–1773 (DVE), Tyr1797, Ser1807, 1816–1826 (EAVFKALGVES), 1840–1843 (RDVN), and 1870–1872 (ISH) contribute to the acetyl-CoA site. Residues Ser1871 and His1872 each coordinate Mg(2+).

The protein belongs to the thiolase-like superfamily. Fungal fatty acid synthetase subunit alpha family. As to quaternary structure, [Alpha(6)beta(6)] hexamers of two multifunctional subunits (alpha and beta).

It catalyses the reaction acetyl-CoA + n malonyl-CoA + 2n NADPH + 4n H(+) = a long-chain-acyl-CoA + n CoA + n CO2 + 2n NADP(+).. It carries out the reaction a fatty acyl-[ACP] + malonyl-[ACP] + H(+) = a 3-oxoacyl-[ACP] + holo-[ACP] + CO2. The catalysed reaction is a (3R)-hydroxyacyl-[ACP] + NADP(+) = a 3-oxoacyl-[ACP] + NADPH + H(+). In terms of biological role, fatty acid synthetase catalyzes the formation of long-chain fatty acids from acetyl-CoA, malonyl-CoA and NADPH. The alpha subunit contains domains for: acyl carrier protein, 3-oxoacyl-[acyl-carrier-protein] reductase, and 3-oxoacyl-[acyl-carrier-protein] synthase. The polypeptide is Fatty acid synthase subunit alpha (FAS2) (Candida albicans (Yeast)).